We begin with the raw amino-acid sequence, 468 residues long: UDP-N-acetylmuramoyl-L-alanine--L-glutamate ligase (468 aa).

122–128 is a binding site for ATP; it reads GTKGKST.

Belongs to the MurCDEF family. MurD2 subfamily.

It localises to the cytoplasm. The enzyme catalyses UDP-N-acetyl-alpha-D-muramoyl-L-alanine + L-glutamate + ATP = UDP-N-acetyl-alpha-D-muramoyl-L-alanyl-L-glutamate + ADP + phosphate + H(+). It functions in the pathway cell wall biogenesis; peptidoglycan biosynthesis. Functionally, cell wall formation. Catalyzes the addition of L-glutamate to the nucleotide precursor UDP-N-acetylmuramoyl-L-alanine. This is UDP-N-acetylmuramoyl-L-alanine--L-glutamate ligase from Xanthomonas campestris pv. campestris (strain 8004).